Consider the following 440-residue polypeptide: Tetratricopeptide repeat protein 5 (440 aa).

TPR repeat units follow at residues 7-61 (EEAK…EEVL), 68-98 (AQALMLKGKALNVTPDYSPEAEVLLSKAVKL), 103-130 (VEAWNQLGEVYWKKGDVASAHTCFSGAL), 136-174 (KVSLQNLSMVLRQLQTDSGDEHSRHVMDSVRQAKLAVQM), and 179-216 (GRSWYILGNAYLSLYFNTGQNPKISQQALSAYAQAEKV). A Nuclear export signal motif is present at residues 13–24 (LQKLQGLVDRLY). A Phosphoserine; by ATM modification is found at serine 203. A Phosphoserine; by CHEK2 modification is found at serine 221. A TPR 6 repeat occupies 224 to 253 (PDLHLNRATLHKYEESYGEALEGFSQAAAL). Residues 285–287 (KPK) form a mediates interaction with 28S rRNA of ribosome-coding tubulin region.

As to quaternary structure, interacts with JMY and p300/EP300; the interaction occurs in the nucleus and augments the association between JMY and p300/EP300 in response to DNA damage. Interacts with PRMT5; the interaction is DNA damage-dependent and promotes PRMT5 interaction with p53/TP53 and subsequent methylation. Forms a complex with HSF1 and p300/EP300; these interactions augment chromatin-bound HSF1 and p300/EP300 histone acetyltransferase activity, resulting in enhanced heat-shock-responsive transcription. Interacts with JMY; the interaction occurs in the cytoplasm and results in the inhibition of JYM's nucleation activity. Interacts with ribosome-coding tubulin (via 60S subunit 28S rRNA and protein uL24/RPL26) and the N-terminal of nascent tubulin polypeptide (via alpha-tubulin MREC motif and beta-tubulin MREI motif); these interactions result in tubulin mRNA-targeted degradation. Interacts with ATP5F1B; the interaction occurs in the mitochondria and results in ATP production decrease. Interacts with p53/TP53; the interaction occurs in the mitochondria and results in increased apoptosis. Post-translationally, phosphorylation by ATM kinase induces nuclear accumulation while interfering with nuclear export, and phosphorylation by CHEK2 kinase enhances nuclear stability. In terms of tissue distribution, expressed in heart, brain, spleen, lung, liver, skeletal muscle, kidney and testis.

Its subcellular location is the nucleus. The protein resides in the cytoplasm. The protein localises to the cytoplasmic vesicle. It localises to the mitochondrion matrix. Cofactor involved in the regulation of various cellular mechanisms such as actin regulation, autophagy, chromatin regulation and DNA repair. In physiological conditions, interacts with cofactor JMY in the cytoplasm which prevents JMY's actin nucleation activity and ability to activate the Arp2/3 complex. Acts as a negative regulator of nutrient stress-induced autophagy by inhibiting JMY's interaction with MAP1LC3B, thereby preventing autophagosome formation. Involves in tubulin autoregulation by promoting its degradation in response to excess soluble tubulin. To do so, associates with the active ribosome near the ribosome exit tunnel and with nascent tubulin polypeptides early during their translation, triggering tubulin mRNA-targeted degradation. Following DNA damage, phosphorylated by DNA damage responsive protein kinases ATM and CHEK2, leading to its nuclear accumulation and stability. Nuclear TTC5/STRAP promotes the assembly of a stress-responsive p53/TP53 coactivator complex, which includes the coactivators JMY and p300, thereby increasing p53/TP53-dependent transcription and apoptosis. Also recruits arginine methyltransferase PRMT5 to p53/TP53 when DNA is damaged, allowing PRMT5 to methylate p53/TP53. In DNA stress conditions, also prevents p53/TP53 degradation by E3 ubiquitin ligase MDM2. Upon heat-shock stress, forms a chromatin-associated complex with heat-shock factor 1 HSF1 and p300/EP300 to stimulate heat-shock-responsive transcription, thereby increasing cell survival. Mitochondrial TTC5/STRAP interacts with ATP synthase subunit beta ATP5F1B which decreased ATP synthase activity and lowers mitochondrial ATP production, thereby regulating cellular respiration and mitochondrial-dependent apoptosis. Mitochondrial TTC5/STRAP also regulates p53/TP53-mediated apoptosis. The polypeptide is Tetratricopeptide repeat protein 5 (Mus musculus (Mouse)).